The chain runs to 204 residues: MKNLTILFKVTTLSLAVALLVGCNDDDDNDTAPPAQRSNQTVNILAFNDFHGNLEPPKRYVEAPNPNDAAQSVRIPVGGVSYFADAIKKLKAENPNNAVVSAGDLISASPLTSSLFLDEPTIEVMNDIQIDFDAVGNHEFDRGTDELRRLKNGGCQQYTSTVPCQINKNFSGAKFDFLAANVAMKNDTSKTIFPAYKVKTYGGI.

This is an uncharacterized protein from Acinetobacter calcoaceticus.